The primary structure comprises 70 residues: Brevinin-1CG3 (70 aa).

Residues 1-22 form the signal peptide; the sequence is MFTLKKSLLLLFFLGTINLSLC. Residues 23–44 constitute a propeptide, removed in mature form; it reads EQERNAEEERRDDSDKRDVEVE. The cysteines at positions 64 and 70 are disulfide-linked.

The protein belongs to the frog skin active peptide (FSAP) family. Brevinin subfamily. As to expression, expressed by the skin glands.

The protein resides in the secreted. Functionally, antimicrobial peptide active against a variety of Gram-positive and some Gram-negative bacterial strains. Has antifungal activity against a slime mold isolate. Has hemolytic activity against human erythrocytes. This chain is Brevinin-1CG3, found in Amolops chunganensis (Chungan torrent frog).